The following is a 140-amino-acid chain: uncharacterized protein (140 aa).

Residues 27-65 (LLGEVSELELQKICFNRSLRNEINQLEEQNDISFVRVER) are a coiled coil.

This is an uncharacterized protein from Pasteurella multocida (strain Pm70).